A 410-amino-acid chain; its full sequence is Elongation factor Tu, chloroplastic (410 aa).

Positions 10–215 (KPHINIGTIG…MVDKYFPTPE (206 aa)) constitute a tr-type G domain. Residues 19 to 26 (GHVDHGKT) form a G1 region. Residue 19–26 (GHVDHGKT) coordinates GTP. Mg(2+) is bound at residue T26. Residues 61–65 (GITIN) form a G2 region. The segment at 82 to 85 (DCPG) is G3. GTP is bound by residues 82 to 86 (DCPGH) and 137 to 140 (NKAD). Residues 137 to 140 (NKAD) are G4. Residues 175-177 (SAL) are G5.

This sequence belongs to the TRAFAC class translation factor GTPase superfamily. Classic translation factor GTPase family. EF-Tu/EF-1A subfamily.

It localises to the plastid. It is found in the chloroplast. It catalyses the reaction GTP + H2O = GDP + phosphate + H(+). Its function is as follows. GTP hydrolase that promotes the GTP-dependent binding of aminoacyl-tRNA to the A-site of ribosomes during protein biosynthesis. The chain is Elongation factor Tu, chloroplastic (tufA) from Cyanidium caldarium (Red alga).